Reading from the N-terminus, the 133-residue chain is Protein NrdI (133 aa).

Belongs to the NrdI family.

Its function is as follows. Probably involved in ribonucleotide reductase function. This chain is Protein NrdI, found in Cronobacter sakazakii (strain ATCC BAA-894) (Enterobacter sakazakii).